The following is a 369-amino-acid chain: Core-capsid bridging protein (369 aa).

Residues 15-50 (APEIYGPPKKEEQDYKPRKLKRVKKKKKDDDDDELD) are disordered. Positions 22 to 31 (PKKEEQDYKP) are enriched in basic and acidic residues. Positions 32 to 41 (RKLKRVKKKK) are enriched in basic residues. At Thr-85 the chain carries Phosphothreonine; by host. Ser-166 is modified (phosphoserine; by host). The segment at 307 to 342 (PGYRGYTYRPRRRATTRRRTTTGTRRRRRRRQPVLA) is disordered. The span at 315-338 (RPRRRATTRRRTTTGTRRRRRRRQ) shows a compositional bias: basic residues.

It belongs to the adenoviridae core-capsid bridging protein family. As to quaternary structure, monomer. Homodimer. Exists in equilibrium between monomers and dimers in solution. Interacts with the histone-like nucleoprotein; this interactions bridge the virus core to the capsid. Interacts with core protein X; this interactions bridge the virus core to the capsid. Interacts with the endosome lysis protein VI; this interactions bridge the virus core to the capsid. Interacts with the peripentonal hexons. Interacts with host NPM1; this interaction might play a role in virus assembly.

Its subcellular location is the virion. It localises to the host nucleus. The protein resides in the host nucleolus. In terms of biological role, associates loosely with the viral DNA to form an outer shell around the nucleoprotein-DNA complex and links it with the capsid by binding the endosome lysis protein. Dissociates from the viral genome during entry. Might be involved in nuclear capsid assembly of the viral particles through its association with NPM1/nucleophosmin. The sequence is that of Core-capsid bridging protein from Homo sapiens (Human).